Consider the following 984-residue polypeptide: Ephrin type-A receptor 3 (984 aa).

An N-terminal signal peptide occupies residues M1–R20. Residues E21–H541 lie on the Extracellular side of the membrane. Residues E29 to K207 enclose the Eph LBD domain. N-linked (GlcNAc...) asparagine glycans are attached at residues N232, N337, N391, N404, and N493. Fibronectin type-III domains lie at P325–A435 and A436–S532. Residues V542–G565 form a helical membrane-spanning segment. Residues R566–V984 are Cytoplasmic-facing. Phosphotyrosine; by autocatalysis is present on residues Y597 and Y603. In terms of domain architecture, Protein kinase spans I622 to I883. ATP contacts are provided by residues G629 to G634, K654, and E701 to S707. The residue at position 702 (Y702) is a Phosphotyrosine; by autocatalysis. The active-site Proton acceptor is the D747. R751–N752 is a binding site for ATP. Y780 is subject to Phosphotyrosine; by autocatalysis. The SAM domain occupies A912–Q976. Phosphotyrosine is present on Y938. The PDZ-binding motif lies at V982–V984.

Belongs to the protein kinase superfamily. Tyr protein kinase family. Ephrin receptor subfamily. In terms of assembly, heterotetramer upon binding of the ligand. The heterotetramer is composed of an ephrin dimer and a receptor dimer. Oligomerization is probably required to induce biological responses. Forms a ternary EFNA5-EPHA3-ADAM10 complex mediating EFNA5 extracellular domain shedding by ADAM10 which regulates the EFNA5-EPHA3 complex internalization and function. Interacts (phosphorylated) with PTPN1; dephosphorylates EPHA3 and may regulate its trafficking and function. Interacts (phosphorylated) with CRK; mediates EFNA5-EPHA3 signaling through RHOA GTPase activation. Interacts with NCK1 (via SH2 domain); mediates EFNA5-EPHA3 signaling. Post-translationally, autophosphorylates upon activation by EFNA5. Phosphorylation on Tyr-603 mediates interaction with NCK1. Dephosphorylated by PTPN1. As to expression, most abundant in the heart, brain and lung.

The protein localises to the cell membrane. The enzyme catalyses L-tyrosyl-[protein] + ATP = O-phospho-L-tyrosyl-[protein] + ADP + H(+). Functionally, receptor tyrosine kinase which binds promiscuously membrane-bound ephrin family ligands residing on adjacent cells, leading to contact-dependent bidirectional signaling into neighboring cells. The signaling pathway downstream of the receptor is referred to as forward signaling while the signaling pathway downstream of the ephrin ligand is referred to as reverse signaling. Highly promiscuous for ephrin-A ligands it binds preferentially EFNA5. Upon activation by EFNA5 regulates cell-cell adhesion, cytoskeletal organization and cell migration. Plays a role in cardiac cells migration and differentiation and regulates the formation of the atrioventricular canal and septum during development probably through activation by EFNA1. Involved in the retinotectal mapping of neurons. May also control the segregation but not the guidance of motor and sensory axons during neuromuscular circuit development. The polypeptide is Ephrin type-A receptor 3 (Epha3) (Rattus norvegicus (Rat)).